We begin with the raw amino-acid sequence, 368 residues long: C-glycoside deglycosidase alpha subunit (368 aa).

A divalent metal cation is bound at residue glutamate 145. Histidine 147 acts as the Proton acceptor in catalysis. Residues aspartate 177, histidine 275, and glutamate 311 each contribute to the a divalent metal cation site.

This sequence belongs to the C-glycoside deglycosidase alpha subunit family. Heterodimer composed of an alpha subunit (CarB) and a beta subunit (CarC). Requires a divalent metal cation as cofactor.

The catalysed reaction is 3''-dehydroisovitexin = 1,5-anhydro-D-erythro-hex-1-en-3-ulose + apigenin. It catalyses the reaction 3''-dehydroisoorientin = 1,5-anhydro-D-erythro-hex-1-en-3-ulose + luteolin. In terms of biological role, carbon-carbon bond-cleaving enzyme which participates in the metabolism of C-glycosides. Acts on the C6-glycosylated compounds 3''-dehydroisovitexin (3''-oxo-isovitexin) and 3''-dehydroisoorientin (3''-oxo-homoorientin). Shows weak activity with 3'-dehydromangiferin (3'-oxo-mangiferin). The sequence is that of C-glycoside deglycosidase alpha subunit from Microbacterium trichothecenolyticum (Aureobacterium trichothecenolyticum).